We begin with the raw amino-acid sequence, 282 residues long: Putative dolichyldiphosphatase (282 aa).

2 helical membrane-spanning segments follow: residues L26–I46 and M93–L113. The tract at residues Q121–S153 is disordered. Residues V138 to G148 are compositionally biased toward low complexity. A run of 2 helical transmembrane segments spans residues W173–A193 and V207–V227.

Belongs to the dolichyldiphosphatase family.

Its subcellular location is the endoplasmic reticulum membrane. The enzyme catalyses a di-trans,poly-cis-dolichyl diphosphate + H2O = a di-trans,poly-cis-dolichyl phosphate + phosphate + H(+). The protein operates within protein modification; protein glycosylation. In Neurospora crassa (strain ATCC 24698 / 74-OR23-1A / CBS 708.71 / DSM 1257 / FGSC 987), this protein is Putative dolichyldiphosphatase.